A 188-amino-acid polypeptide reads, in one-letter code: Large ribosomal subunit protein eL18 (188 aa).

A Glycyl lysine isopeptide (Lys-Gly) (interchain with G-Cter in SUMO2) cross-link involves residue K119. S130 bears the Phosphoserine mark. Residues R150 to N188 are disordered. T158 bears the Phosphothreonine mark. 2 stretches are compositionally biased toward basic residues: residues S161–G171 and R178–N188. K164 is covalently cross-linked (Glycyl lysine isopeptide (Lys-Gly) (interchain with G-Cter in SUMO2)).

This sequence belongs to the eukaryotic ribosomal protein eL18 family. As to quaternary structure, component of the large ribosomal subunit.

The protein localises to the cytoplasm. It localises to the cytosol. The protein resides in the rough endoplasmic reticulum. Component of the large ribosomal subunit. The ribosome is a large ribonucleoprotein complex responsible for the synthesis of proteins in the cell. The sequence is that of Large ribosomal subunit protein eL18 (Rpl18) from Mus musculus (Mouse).